The chain runs to 248 residues: Probable transcriptional regulatory protein PSPA7_4544 (248 aa).

Belongs to the TACO1 family.

The protein localises to the cytoplasm. The protein is Probable transcriptional regulatory protein PSPA7_4544 of Pseudomonas paraeruginosa (strain DSM 24068 / PA7) (Pseudomonas aeruginosa (strain PA7)).